Consider the following 538-residue polypeptide: MAAKLVSLDMQARTALIRGLDIVADTVKITLGPKGRNVVLEKKFGAPVITNDGVTIAKEIDLEDPFENMGAQLVKEVASKTNDVAGDGTTTATVLAQALVHEGMKHVVAGANPMYVRRGIEKAVEKVVEELKKIAKPVETKQDIAHVAAISANNDTEIGNLIAEAMDKVGKDGVITVEESQGITTTLELVEGMQFDRGYLSAYMITDPERMEAVLEEPYILITDRKISAVSEILPILERVVQTGKPLVIIAEDVEGEALATLVVNKLRGVLQSLAVKAPGFGDRRKAMLQDIAILTGGQFISEETGIKLENVTLDMLGRAEKVRANKDKTTIIGGKGNKKDIEARIAQIKKQLEETDSEFDREKLQERLAKLAGGVAVIKVGAATEVELKEKKHRIEDALSATKAAVEEGIVPGGGVALLRTIKALDDVKVDNEDERIGVEIVRRSLDVPLKLIANNAGKEGSIIAEKVKEMDGPMGYDAANDRFVNMFEAGIVDPAKVTRSALQNAASIAALVLTTEGLVAEKPEKEKQTPPPPPEY.

ATP contacts are provided by residues 30–33, 87–91, glycine 415, 479–481, and aspartate 495; these read TLGP, DGTTT, and DAA.

It belongs to the chaperonin (HSP60) family. Forms a cylinder of 14 subunits composed of two heptameric rings stacked back-to-back. Interacts with the co-chaperonin GroES.

Its subcellular location is the cytoplasm. It carries out the reaction ATP + H2O + a folded polypeptide = ADP + phosphate + an unfolded polypeptide.. Together with its co-chaperonin GroES, plays an essential role in assisting protein folding. The GroEL-GroES system forms a nano-cage that allows encapsulation of the non-native substrate proteins and provides a physical environment optimized to promote and accelerate protein folding. This chain is Chaperonin GroEL, found in Dictyoglomus thermophilum (strain ATCC 35947 / DSM 3960 / H-6-12).